The primary structure comprises 389 residues: MEAAGAPCAPPPPAGSQTGAPPANLSSAPHNCSAEGYIYQDSVALPWKVLLVILLALITLATTLSNAFVIATVYRTRKLHTPANYLIASLAVTDLLVSILVMPISTMYTVTGRWTLGQVVCDLWLSSDITCCTASILHLCVIALDRYWAITDAVEYSAKRTPKRAAVMIALVWVFSISISLPPFFWRQAKAEEEVSDCVVNTDHILYTVYSTVGAFYFPTLLLIALYGRIYVEARSRILKQTPNRTGKRLTRAQLITDSPGSTSSVTSVNSRAPDVPSESGSPVYVNQVKVRVSDALLEKKKLMAARERKATKTLGIILGAFIVCWLPFFIISLVMPICKDACWFHLAIFDFFTWLGYLNSLINPIIYTMSNEDFKQAFHKLIRFKCAG.

Residues 1–27 are disordered; it reads MEAAGAPCAPPPPAGSQTGAPPANLSS. Residues 1–45 lie on the Extracellular side of the membrane; that stretch reads MEAAGAPCAPPPPAGSQTGAPPANLSSAPHNCSAEGYIYQDSVAL. Positions 16–27 are enriched in polar residues; it reads SQTGAPPANLSS. N24 and N31 each carry an N-linked (GlcNAc...) asparagine glycan. The chain crosses the membrane as a helical span at residues 46 to 71; sequence PWKVLLVILLALITLATTLSNAFVIA. Residues 72–85 lie on the Cytoplasmic side of the membrane; it reads TVYRTRKLHTPANY. The chain crosses the membrane as a helical span at residues 86-110; that stretch reads LIASLAVTDLLVSILVMPISTMYTV. At 111–118 the chain is on the extracellular side; the sequence is TGRWTLGQ. The chain crosses the membrane as a helical span at residues 119–144; that stretch reads VVCDLWLSSDITCCTASILHLCVIAL. C121 and C198 form a disulfide bridge. The ergotamine site is built by D128 and T133. The DRY motif; important for ligand-induced conformation changes and signaling motif lies at 145-147; the sequence is DRY. Residues 145–164 lie on the Cytoplasmic side of the membrane; sequence DRYWAITDAVEYSAKRTPKR. A helical transmembrane segment spans residues 165–183; it reads AAVMIALVWVFSISISLPP. Topologically, residues 184 to 204 are extracellular; sequence FFWRQAKAEEEVSDCVVNTDH. Residue V200 coordinates ergotamine. Residues 205–228 form a helical membrane-spanning segment; the sequence is ILYTVYSTVGAFYFPTLLLIALYG. Residues 229–314 are Cytoplasmic-facing; sequence RIYVEARSRI…AARERKATKT (86 aa). The span at 258-271 shows a compositional bias: polar residues; it reads DSPGSTSSVTSVNS. The segment at 258–281 is disordered; the sequence is DSPGSTSSVTSVNSRAPDVPSESG. A helical membrane pass occupies residues 315 to 336; the sequence is LGIILGAFIVCWLPFFIISLVM. Residues 337-346 are Extracellular-facing; the sequence is PICKDACWFH. The helical transmembrane segment at 347–369 threads the bilayer; sequence LAIFDFFTWLGYLNSLINPIIYT. Positions 364–368 match the NPxxY motif; important for ligand-induced conformation changes and signaling motif; the sequence is NPIIY. Over 370–389 the chain is Cytoplasmic; that stretch reads MSNEDFKQAFHKLIRFKCAG. Residue C387 is the site of S-palmitoyl cysteine attachment.

Belongs to the G-protein coupled receptor 1 family. As to quaternary structure, homodimer. Heterodimer with HTR1D. Post-translationally, phosphorylated. Desensitization of the receptor may be mediated by its phosphorylation. In terms of processing, palmitoylated.

The protein resides in the cell membrane. G-protein coupled receptor for 5-hydroxytryptamine (serotonin). Also functions as a receptor for ergot alkaloid derivatives, various anxiolytic and antidepressant drugs and other psychoactive substances, such as lysergic acid diethylamide (LSD). Ligand binding causes a conformation change that triggers signaling via guanine nucleotide-binding proteins (G proteins) and modulates the activity of downstream effectors, such as adenylate cyclase. HTR1B is coupled to G(i)/G(o) G alpha proteins and mediates inhibitory neurotransmission by inhibiting adenylate cyclase activity. Arrestin family members inhibit signaling via G proteins and mediate activation of alternative signaling pathways. Regulates the release of 5-hydroxytryptamine, dopamine and acetylcholine in the brain, and thereby affects neural activity, nociceptive processing, pain perception, mood and behavior. Besides, plays a role in vasoconstriction of cerebral arteries. In Canis lupus familiaris (Dog), this protein is 5-hydroxytryptamine receptor 1B (HTR1B).